A 115-amino-acid polypeptide reads, in one-letter code: Histidine decarboxylase proenzyme (115 aa).

S83 bears the Pyruvic acid (Ser) mark.

The proenzyme is a hexamer of identical pi chains; each pi chain monomer is cleaved to form a small (or beta) chain and a large (or alpha) chain by non-hydrolytic self-catalysis. Pyruvate serves as cofactor.

It catalyses the reaction L-histidine + H(+) = histamine + CO2. The protein is Histidine decarboxylase proenzyme of Lentilactobacillus buchneri (Lactobacillus buchneri).